The primary structure comprises 105 residues: Small ribosomal subunit protein uS17 (105 aa).

Belongs to the universal ribosomal protein uS17 family. Part of the 30S ribosomal subunit. Contacts protein S12.

In terms of biological role, one of the primary rRNA binding proteins, it binds directly to 16S rRNA where it helps nucleate assembly of the platform and body of the 30S subunit by bringing together and stabilizing interactions between several different RNA helices. The combined cluster of proteins S8, S12 and S17 appears to hold together the shoulder and platform of the 30S subunit. This Thermus thermophilus (strain ATCC 27634 / DSM 579 / HB8) protein is Small ribosomal subunit protein uS17.